The primary structure comprises 370 residues: DNA-directed RNA polymerase II subunit GRINL1A (370 aa).

Residues 1 to 20 (MSSLPRGFEPQTPEDLGQRS) are disordered. Residues 15-69 (DLGQRSLAELREMLKRQERLLRNVKFICKLPDKGKKISDAVTKLKAAIAEREEVR) are a coiled coil. Positions 29–68 (KRQERLLRNVKFICKLPDKGKKISDAVTKLKAAIAEREEV) are important for transcription repressor activity. Disordered regions lie at residues 93–172 (DGDR…ASEG), 204–226 (DPTEHHSEGNRNPENLAGLWSGP), and 241–283 (KNPM…RRDR). A compositionally biased stretch (polar residues) spans 101–131 (NSDQILDTSSPVPGCSSVANITSSQTTSRQQ). A compositionally biased stretch (basic and acidic residues) spans 138–152 (RGGDAEAAEAEHTVS). Residues 155 to 170 (PTSSSGAPAPSSSQAS) show a composition bias toward low complexity. Over residues 205-214 (PTEHHSEGNR) the composition is skewed to basic and acidic residues. The tract at residues 228 to 299 (KKPHYMEVLE…TAARLLPLHH (72 aa)) is interaction with Pol II. Over residues 254-266 (VLPSQPRDSSSAC) the composition is skewed to polar residues. A Phosphoserine modification is found at serine 271. The segment at 300–315 (LPTQLLSIEESLALQR) is important for transcription repressor activity. Residues 303-328 (QLLSIEESLALQRQQKQSYEEIQAKL) are a coiled coil. The segment at 316–341 (QQKQSYEEIQAKLAAQKLAERLNIKM) is interaction with Pol II. The interval 340–370 (KMQSYNPEGESSRKYREVRDEDDDQSSEDEF) is disordered. Positions 349 to 358 (ESSRKYREVR) are enriched in basic and acidic residues. Residues 359–370 (DEDDDQSSEDEF) are compositionally biased toward acidic residues.

It belongs to the GRINL1 family. In terms of assembly, component of the Pol II(G) complex, which contains the RNA polymerase II (Pol II) core complex subunits and POLR2M and appears to be an abundant form of Pol II. Dephosphorylated at Ser-271 by the PNUTS-PP1 complex, promoting RNA polymerase II transcription pause-release.

It localises to the nucleus. Its function is as follows. Appears to be a stable component of the Pol II(G) complex form of RNA polymerase II (Pol II). Pol II synthesizes mRNA precursors and many functional non-coding RNAs and is the central component of the basal RNA polymerase II transcription machinery. May play a role in Mediator complex-dependent regulation of transcription activation. Acts in vitro as a negative regulator of transcriptional activation; this repression is relieved by the Mediator complex, which restores Pol II(G) activator-dependent transcription to a level equivalent to that of Pol II. The sequence is that of DNA-directed RNA polymerase II subunit GRINL1A (POLR2M) from Bos taurus (Bovine).